The primary structure comprises 208 residues: Ribosomal RNA small subunit methyltransferase J (208 aa).

Residues 54–55, 70–71, and Asp-122 contribute to the S-adenosyl-L-methionine site; these read RD and ER.

It belongs to the methyltransferase superfamily. RsmJ family.

It localises to the cytoplasm. The catalysed reaction is guanosine(1516) in 16S rRNA + S-adenosyl-L-methionine = N(2)-methylguanosine(1516) in 16S rRNA + S-adenosyl-L-homocysteine + H(+). Functionally, specifically methylates the guanosine in position 1516 of 16S rRNA. This Agrobacterium fabrum (strain C58 / ATCC 33970) (Agrobacterium tumefaciens (strain C58)) protein is Ribosomal RNA small subunit methyltransferase J.